The primary structure comprises 188 residues: Protein salivary glands marred (188 aa).

It belongs to the TNFAIP8 family. Interacts with the Ste20-like MAP kinase msn.

The protein resides in the cytoplasm. The protein localises to the cytoskeleton. Functionally, important for modulating JNK signaling, cytoskeletal remodeling and autophagy in larval salivary glands. During salivary gland development, involved in the positive regulation of the JNK signaling pathway, acting downstream of the TNF ligand egr and upstream of bsk. The chain is Protein salivary glands marred from Drosophila melanogaster (Fruit fly).